The following is a 317-amino-acid chain: tRNA(Ile)-lysidine synthase (317 aa).

30–35 (SGGSDS) is a binding site for ATP.

Belongs to the tRNA(Ile)-lysidine synthase family.

Its subcellular location is the cytoplasm. The enzyme catalyses cytidine(34) in tRNA(Ile2) + L-lysine + ATP = lysidine(34) in tRNA(Ile2) + AMP + diphosphate + H(+). In terms of biological role, ligates lysine onto the cytidine present at position 34 of the AUA codon-specific tRNA(Ile) that contains the anticodon CAU, in an ATP-dependent manner. Cytidine is converted to lysidine, thus changing the amino acid specificity of the tRNA from methionine to isoleucine. This Chlamydia felis (strain Fe/C-56) (Chlamydophila felis) protein is tRNA(Ile)-lysidine synthase.